Here is a 197-residue protein sequence, read N- to C-terminus: MAKMMGPRFKMCRRLGLNVVGHPKAMKRADRGTSRADKKLSDYGIQLLEKQRLRAYYGVMERQFTRYVDQAFNSKEQPGEALLMILESRLDNMVYRMGFASSIRQARQMVNHGHFLVNGKKVNIPSFRLNIGDEVVLREKSRKTEMFVNNFKDSIGSEVPYISKEEDNFKGIFARKPKREEIPITIQEQLIVEFYSK.

In terms of domain architecture, S4 RNA-binding spans 88-150 (SRLDNMVYRM…SRKTEMFVNN (63 aa)).

It belongs to the universal ribosomal protein uS4 family. Part of the 30S ribosomal subunit. Contacts protein S5. The interaction surface between S4 and S5 is involved in control of translational fidelity.

In terms of biological role, one of the primary rRNA binding proteins, it binds directly to 16S rRNA where it nucleates assembly of the body of the 30S subunit. With S5 and S12 plays an important role in translational accuracy. This chain is Small ribosomal subunit protein uS4B, found in Clostridium perfringens (strain SM101 / Type A).